A 2995-amino-acid chain; its full sequence is Striated muscle preferentially expressed protein kinase (2995 aa).

The region spanning 27-109 (PPVFLRKLKW…GEARTSAVLA (83 aa)) is the Ig-like 1 domain. The cysteines at positions 50 and 93 are disulfide-linked. 2 disordered regions span residues 250–272 (ITGS…KVSQ) and 384–467 (LTQT…NSKP). The span at 384-404 (LTQTDKQSSVSTESVPTQVIQ) shows a compositional bias: polar residues. Over residues 454–464 (PPEMNENQENN) the composition is skewed to low complexity. Ig-like domains lie at 613 to 701 (PAES…EELI) and 714 to 802 (PLFT…AELY). Cys639 and Cys691 are oxidised to a cystine. A disordered region spans residues 815–834 (SRLEKMPSIPEEPEVPEGEV). The 91-residue stretch at 840–930 (PDFIKPLSDL…AACYAHLYVA (91 aa)) folds into the Ig-like 4 domain. Cysteines 861 and 912 form a disulfide. Residues 937–1035 (PDGPPVIESV…TDLVQLVDRG (99 aa)) enclose the Fibronectin type-III 1 domain. Residues 1135 to 1224 (PPIFETIMED…GSVSCKAELT (90 aa)) form the Ig-like 5 domain. Residues 1255–1505 (YDIHKEIGRG…ATECLLHPWF (251 aa)) enclose the Protein kinase 1 domain. Residues 1261–1269 (IGRGAFSYV) and Lys1283 contribute to the ATP site. Asp1372 serves as the catalytic Proton acceptor. Disordered stretches follow at residues 1559 to 1582 (VPRN…DIDE), 1776 to 1839 (RNFR…STGD), 2017 to 2058 (LKRL…TGLK), 2163 to 2189 (VHSR…VEKQ), 2211 to 2254 (SGIS…KMDI), and 2268 to 2322 (SKET…KEDF). Positions 1786-1795 (SGDSGTFNND) are enriched in polar residues. Over residues 2274 to 2284 (SSSSAHSIESS) the composition is skewed to low complexity. Positions 2289–2299 (TEIRSRWDRWG) are enriched in basic and acidic residues. One can recognise an Ig-like 6 domain in the interval 2323 to 2413 (PPVFHIALKD…ASVTTSCILT (91 aa)). Cysteines 2345 and 2397 form a disulfide. The Fibronectin type-III 2 domain occupies 2420 to 2513 (CPGTPEIRQI…DGVSIDTKVT (94 aa)). 2 disordered regions span residues 2574–2609 (PKMS…YTAP) and 2648–2676 (GEGA…LRQG). Polar residues-rich tracts occupy residues 2587–2605 (SSVN…SPRS) and 2652–2674 (SSPT…TTLR). Positions 2682 to 2934 (YSFLDEKARG…IKDCLNHSWL (253 aa)) constitute a Protein kinase 2 domain. Residues 2688–2696 (KARGRFGVI) and Lys2711 each bind ATP. Residue Asp2801 is the Proton acceptor of the active site.

This sequence belongs to the protein kinase superfamily. CAMK Ser/Thr protein kinase family. May be autophosphorylated. Preferentially expressed in striated muscle.

Its subcellular location is the nucleus. The enzyme catalyses L-seryl-[protein] + ATP = O-phospho-L-seryl-[protein] + ADP + H(+). It catalyses the reaction L-threonyl-[protein] + ATP = O-phospho-L-threonyl-[protein] + ADP + H(+). The sequence is that of Striated muscle preferentially expressed protein kinase (speg) from Danio rerio (Zebrafish).